The following is a 90-amino-acid chain: Conotoxin Mr22.1 (90 aa).

A signal peptide spans 1–18 (MMTRVFFAMFFLMALTEG). Residues 19 to 49 (WPRLYDSDCVRGRNMHITCFKDQTCGLTVKR) constitute a propeptide that is removed on maturation. Residue Trp-75 is modified to 6'-bromotryptophan.

This sequence belongs to the E superfamily. Post-translationally, contains 4 disulfide bonds. In terms of tissue distribution, expressed by the venom duct.

It is found in the secreted. The polypeptide is Conotoxin Mr22.1 (Conus marmoreus (Marble cone)).